We begin with the raw amino-acid sequence, 359 residues long: Putative B3 domain-containing protein At3g24850 (359 aa).

Disordered regions lie at residues 92–111 (DSEI…LQNS) and 159–192 (EKME…KRTG). The segment covering 100 to 111 (TSDSQMKTLQNS) has biased composition (polar residues). The TF-B3 DNA-binding region spans 250–351 (FNNLLQNDFL…VLCFAMEQSS (102 aa)).

Its subcellular location is the nucleus. This Arabidopsis thaliana (Mouse-ear cress) protein is Putative B3 domain-containing protein At3g24850.